The sequence spans 2376 residues: Reducing polyketide synthase DEP5 (2376 aa).

In terms of domain architecture, Ketosynthase family 3 (KS3) spans 47-477; it reads LEPIAVVGMG…GTNAHTIIES (431 aa). Active-site for beta-ketoacyl synthase activity residues include Cys221, His358, and His399. The interval 593–906 is malonyl-CoA:ACP transacylase (MAT) domain; sequence VFTGQGAQWA…QYLPTLVRGF (314 aa). Ser685 serves as the catalytic For malonyltransferase activity. The tract at residues 983-1121 is N-terminal hotdog fold; it reads HDVLGQLTTG…GSIAIRTSAR (139 aa). Residues 983–1158 are dehydratase (DH) domain; it reads HDVLGQLTTG…FNYGPTFQDM (176 aa). The PKS/mFAS DH domain maps to 983-1286; the sequence is HDVLGQLTTG…CIAYEAAIPQ (304 aa). His1015 serves as the catalytic Proton acceptor; for dehydratase activity. Residues 1131–1286 form a C-terminal hotdog fold region; that stretch reads LPQRASGRLW…CIAYEAAIPQ (156 aa). Residue Asp1195 is the Proton donor; for dehydratase activity of the active site. The segment at 1659 to 1964 is enoyl reductase (ER) domain; it reads GRIQAGKVVF…DSICDNKIVI (306 aa). The interval 1988–2163 is ketoreductase (KR) domain; that stretch reads ATYLLVGCLG…KPACAVVLPM (176 aa). Residues 2289–2368 form the Carrier domain; that stretch reads DLVRDHFIAK…KFSELVCGAQ (80 aa). Ser2327 carries the O-(pantetheine 4'-phosphoryl)serine modification.

It functions in the pathway polyketide biosynthesis. Its function is as follows. Reducing polyketide synthase; part of the gene cluster that mediates the biosynthesis of depudecin, a highly oxidized eleven-carbon linear polyketide that acts as a histone deacetylase (HDAC) inhibitor and makes a small contribution to pathogenesis. The reducing polyketide synthase DEP5 is the central enzyme in depudecin biosynthesis by yielding the backbone polyketide chain. The monooxygenases DEP2 and DEP4, as well as the uncharacterized protein DEP1, then act as tailoring enzymes to modify the intermediate polyketide chain into depudecin. The protein is Reducing polyketide synthase DEP5 of Alternaria brassicicola (Dark leaf spot agent).